The chain runs to 177 residues: Protein LIGHT-DEPENDENT SHORT HYPOCOTYLS 10 (177 aa).

Basic and acidic residues predominate over residues 1–10 (MSSPRERGKS). Disordered stretches follow at residues 1–31 (MSSP…SQKR) and 144–177 (RGIP…FSFS). An ALOG domain is found at 25–152 (RYESQKRRDW…ARGIPYKKKK (128 aa)). Residues 150-154 (KKKKK) carry the Nuclear localization signal motif. The span at 168 to 177 (SSSSSSFSFS) shows a compositional bias: low complexity.

It belongs to the plant homeotic and developmental regulators ALOG protein family.

Its subcellular location is the nucleus. Its function is as follows. Probable transcription regulator that acts as a developmental regulator by promoting cell growth in response to light. In Arabidopsis thaliana (Mouse-ear cress), this protein is Protein LIGHT-DEPENDENT SHORT HYPOCOTYLS 10 (LSH10).